The chain runs to 139 residues: Protein PsiE homolog (139 aa).

4 helical membrane passes run 20-40 (IVLC…LVKI), 60-80 (AEQA…VQYF), 85-105 (HFPL…LIIV), and 111-131 (VDTI…CLVL).

Belongs to the PsiE family.

The protein localises to the cell inner membrane. The protein is Protein PsiE homolog of Haemophilus influenzae (strain 86-028NP).